The sequence spans 296 residues: MYLSLLKSLNRLSPRAWDFIQLTRIDKPIGVYLLLWPTLWAVWIAGKGAPSLQTVCIFVLGVFLMRAAGCVINDFADRKVDGHVKRTEQRPLVSGKVSPREALVLFAVLVGLSFVLVLFTNAATIWLSFGGLALAASYPFMKRYTYYPQVVLGAAFSWGMPMAFTAETGELPAAAWLLYIANLLWTVGYDTYYAMVDRDDDLKIGVKSTAVLFGDADRVIILTLQGLALGCLMLAGARFELGACFYIGLLAAAGCFAWEFWSTRERERDACFKAFLHNHWAGLAIFLGIVADYAVR.

The next 8 membrane-spanning stretches (helical) occupy residues 29–49, 52–72, 102–122, 146–166, 169–189, 219–239, 241–261, and 275–295; these read IGVY…GKGA, LQTV…GCVI, ALVL…FTNA, YYPQ…AFTA, GELP…TVGY, VIIL…GARF, LGAC…WEFW, and FLHN…DYAV.

Belongs to the UbiA prenyltransferase family. The cofactor is Mg(2+).

It is found in the cell inner membrane. The catalysed reaction is all-trans-octaprenyl diphosphate + 4-hydroxybenzoate = 4-hydroxy-3-(all-trans-octaprenyl)benzoate + diphosphate. The protein operates within cofactor biosynthesis; ubiquinone biosynthesis. In terms of biological role, catalyzes the prenylation of para-hydroxybenzoate (PHB) with an all-trans polyprenyl group. Mediates the second step in the final reaction sequence of ubiquinone-8 (UQ-8) biosynthesis, which is the condensation of the polyisoprenoid side chain with PHB, generating the first membrane-bound Q intermediate 3-octaprenyl-4-hydroxybenzoate. The sequence is that of 4-hydroxybenzoate octaprenyltransferase from Pseudomonas syringae pv. syringae (strain B728a).